The sequence spans 393 residues: MKRPVTGKDLMIVNMGPHHPSMHGVLRLIVTLDGEDVVDCEPILGYLHRGMEKIAENRAIIQYLPYVTRWDYLATMFTEAITVNGPEQLGNIQVPKRASYIRVIMLELSRIASHLLWLGPFMADIGAQTPFFYIFREREFVYDLFEAATGMRMMHNFFRIGGIAADLPYGWIDKCLDFCDYFLTEVVEYQKLITRNPIFLERVEGVGIIGGEEAINWGLSGPMLRASGIPWDLRKVDRYESYDEFEWEIQWQKQGDSLARYLVRLSEMTESIKIIQQALEGLPGGPYENLESRSFDRKRNPEWNDFDYRFISKKPSPTFELSKQELYVRVEAPKGELGIFLIGDQSGFPWRWKIRPPGFINLQILPELVKRMKLADIMTILGSIDIIMGEVDR.

The protein belongs to the complex I 49 kDa subunit family. NDH is composed of at least 16 different subunits, 5 of which are encoded in the nucleus.

The protein localises to the plastid. Its subcellular location is the chloroplast thylakoid membrane. The enzyme catalyses a plastoquinone + NADH + (n+1) H(+)(in) = a plastoquinol + NAD(+) + n H(+)(out). It catalyses the reaction a plastoquinone + NADPH + (n+1) H(+)(in) = a plastoquinol + NADP(+) + n H(+)(out). NDH shuttles electrons from NAD(P)H:plastoquinone, via FMN and iron-sulfur (Fe-S) centers, to quinones in the photosynthetic chain and possibly in a chloroplast respiratory chain. The immediate electron acceptor for the enzyme in this species is believed to be plastoquinone. Couples the redox reaction to proton translocation, and thus conserves the redox energy in a proton gradient. The polypeptide is NAD(P)H-quinone oxidoreductase subunit H, chloroplastic (Lepidium virginicum (Virginia pepperweed)).